The sequence spans 163 residues: Large ribosomal subunit protein bL19 (163 aa).

The segment covering 131–150 (ISQERKASGKDQASKPEVRP) has biased composition (basic and acidic residues). Residues 131–163 (ISQERKASGKDQASKPEVRPQGKKPAPKPKAKK) are disordered. Positions 151 to 163 (QGKKPAPKPKAKK) are enriched in basic residues.

This sequence belongs to the bacterial ribosomal protein bL19 family.

Functionally, this protein is located at the 30S-50S ribosomal subunit interface and may play a role in the structure and function of the aminoacyl-tRNA binding site. The protein is Large ribosomal subunit protein bL19 of Rhodospirillum rubrum (strain ATCC 11170 / ATH 1.1.1 / DSM 467 / LMG 4362 / NCIMB 8255 / S1).